We begin with the raw amino-acid sequence, 261 residues long: Triosephosphate isomerase (261 aa).

10 to 12 (NWK) is a binding site for substrate. Catalysis depends on His100, which acts as the Electrophile. The Proton acceptor role is filled by Glu172. Residues Gly178, Ser218, and 239-240 (GG) contribute to the substrate site.

This sequence belongs to the triosephosphate isomerase family. Homodimer.

The protein resides in the cytoplasm. The catalysed reaction is D-glyceraldehyde 3-phosphate = dihydroxyacetone phosphate. It functions in the pathway carbohydrate biosynthesis; gluconeogenesis. It participates in carbohydrate degradation; glycolysis; D-glyceraldehyde 3-phosphate from glycerone phosphate: step 1/1. Functionally, involved in the gluconeogenesis. Catalyzes stereospecifically the conversion of dihydroxyacetone phosphate (DHAP) to D-glyceraldehyde-3-phosphate (G3P). The polypeptide is Triosephosphate isomerase (Mycobacteroides abscessus (strain ATCC 19977 / DSM 44196 / CCUG 20993 / CIP 104536 / JCM 13569 / NCTC 13031 / TMC 1543 / L948) (Mycobacterium abscessus)).